A 1082-amino-acid polypeptide reads, in one-letter code: AP-3 complex subunit beta-2 (1082 aa).

The segment at 1 to 30 (MSAAPAYSEDKGGSAGPGEPEYGHDPASGG) is disordered. Phosphoserine occurs at positions 272 and 282. Residues 666 to 677 (NREKRKEKEKPF) show a composition bias toward basic and acidic residues. The segment at 666–801 (NREKRKEKEK…KTPPGSKSAP (136 aa)) is disordered. Positions 691-700 (ADSEPESESE) are enriched in acidic residues. Residues 704–715 (KSSSGSGSGESS) are compositionally biased toward low complexity. Acidic residues-rich tracts occupy residues 716 to 726 (SESDNEEEDEE) and 775 to 784 (VTSESEEEQV).

This sequence belongs to the adaptor complexes large subunit family. As to quaternary structure, adaptor protein complex 3 (AP-3) is a heterotetramer composed of two large adaptins (delta-type subunit AP3D1 and beta-type subunit AP3B1 or AP3B2), a medium adaptin (mu-type subunit AP3M1 or AP3M2) and a small adaptin (sigma-type subunit APS1 or AP3S2). AP-3 associates with the BLOC-1 complex.

The protein resides in the cytoplasmic vesicle. It is found in the clathrin-coated vesicle membrane. It localises to the golgi apparatus. Its function is as follows. Subunit of non-clathrin- and clathrin-associated adaptor protein complex 3 (AP-3) that plays a role in protein sorting in the late-Golgi/trans-Golgi network (TGN) and/or endosomes. The AP complexes mediate both the recruitment of clathrin to membranes and the recognition of sorting signals within the cytosolic tails of transmembrane cargo molecules. AP-3 appears to be involved in the sorting of a subset of transmembrane proteins targeted to lysosomes and lysosome-related organelles. In concert with the BLOC-1 complex, AP-3 is required to target cargos into vesicles assembled at cell bodies for delivery into neurites and nerve terminals. This is AP-3 complex subunit beta-2 (Ap3b2) from Mus musculus (Mouse).